We begin with the raw amino-acid sequence, 524 residues long: Putative cysteine ligase BshC (524 aa).

Residues 437 to 457 (AQALDRSARKINYQIEKMERK) adopt a coiled-coil conformation.

This sequence belongs to the BshC family.

The chain is Putative cysteine ligase BshC from Solibacter usitatus (strain Ellin6076).